Reading from the N-terminus, the 69-residue chain is Cap-specific mRNA (nucleoside-2'-O-)-methyltransferase (69 aa).

Y22 provides a ligand contact to mRNA. 3 residues coordinate S-adenosyl-L-methionine: Q39, Y66, and G68.

This sequence belongs to the class I-like SAM-binding methyltransferase superfamily. Poxvirus/kinetoplastid 2'-O-MTase family. As to quaternary structure, interacts with poly(A) polymerase catalytic subunit OPG063. Interacts with OPG109 and OPG123; these interactions might help linking transcription to capping and polyadenylation.

It localises to the virion. It carries out the reaction a 5'-end (N(7)-methyl 5'-triphosphoguanosine)-ribonucleoside in mRNA + S-adenosyl-L-methionine = a 5'-end (N(7)-methyl 5'-triphosphoguanosine)-(2'-O-methyl-ribonucleoside) in mRNA + S-adenosyl-L-homocysteine + H(+). Its function is as follows. Displays methyltransferase, positive regulation of the poly(A) polymerase and transcription elongation activities. Involved in the modification of both mRNA ends and in intermediate and late gene positive transcription elongation. At the mRNAs 5' end, methylates the ribose 2' OH group of the first transcribed nucleotide, thereby producing a 2'-O-methylpurine cap. At the 3' end, functions as a processivity factor which stimulates the activity of the viral poly(A) polymerase OPG063 that creates mRNA's poly(A) tail. In the presence of OPG102, OPG063 does not dissociate from the RNA allowing tail elongation to around 250 adenylates. This chain is Cap-specific mRNA (nucleoside-2'-O-)-methyltransferase (OPG102), found in Sus scrofa (Pig).